Here is a 187-residue protein sequence, read N- to C-terminus: MSGGREIALLGGSFNPPHVAHLMAAWWALATQGVSEVWLLPAFRHPFGKELAPFEDRLEMCRLAARALRGVHVCGAEAELAGDPLVGKTARTLEHLAAKHPTYRFALVVGADILAETAKWYRWDRVQELARIIVVGRQGHPPVPGAPDLPAISSTEIRARLARGEDVRGLVPDRVLRYVEAQRLYRG.

Belongs to the NadD family.

It catalyses the reaction nicotinate beta-D-ribonucleotide + ATP + H(+) = deamido-NAD(+) + diphosphate. The protein operates within cofactor biosynthesis; NAD(+) biosynthesis; deamido-NAD(+) from nicotinate D-ribonucleotide: step 1/1. Its function is as follows. Catalyzes the reversible adenylation of nicotinate mononucleotide (NaMN) to nicotinic acid adenine dinucleotide (NaAD). The polypeptide is Probable nicotinate-nucleotide adenylyltransferase (Anaeromyxobacter dehalogenans (strain 2CP-C)).